The following is a 59-amino-acid chain: Large ribosomal subunit protein bL32 (59 aa).

The segment covering 1-19 (MAQPKKKTSKSRRNMRRSH) has biased composition (basic residues). Residues 1 to 20 (MAQPKKKTSKSRRNMRRSHD) are disordered.

The protein belongs to the bacterial ribosomal protein bL32 family.

The protein is Large ribosomal subunit protein bL32 of Maridesulfovibrio salexigens (strain ATCC 14822 / DSM 2638 / NCIMB 8403 / VKM B-1763) (Desulfovibrio salexigens).